Here is a 348-residue protein sequence, read N- to C-terminus: Histidinol-phosphate aminotransferase (348 aa).

Lys-210 carries the post-translational modification N6-(pyridoxal phosphate)lysine.

The protein belongs to the class-II pyridoxal-phosphate-dependent aminotransferase family. Histidinol-phosphate aminotransferase subfamily. In terms of assembly, homodimer. Pyridoxal 5'-phosphate serves as cofactor.

The enzyme catalyses L-histidinol phosphate + 2-oxoglutarate = 3-(imidazol-4-yl)-2-oxopropyl phosphate + L-glutamate. The protein operates within amino-acid biosynthesis; L-histidine biosynthesis; L-histidine from 5-phospho-alpha-D-ribose 1-diphosphate: step 7/9. The polypeptide is Histidinol-phosphate aminotransferase (Pseudomonas putida (strain ATCC 47054 / DSM 6125 / CFBP 8728 / NCIMB 11950 / KT2440)).